We begin with the raw amino-acid sequence, 345 residues long: Low-density lipoprotein receptor class A domain-containing protein 3 (345 aa).

The N-terminal stretch at 1-17 is a signal peptide; it reads MWLLGPLCLLLSSAAES. The Extracellular segment spans residues 18–173; that stretch reads QLLPGNNFTN…NQLVYYPSIT (156 aa). Asparagine 24 carries an N-linked (GlcNAc...) asparagine glycan. LDL-receptor class A domains lie at 28–65, 70–107, and 112–148; these read ECNIPGNFMCSNGRCIPGAWQCDGLPDCFDKSDEKECP, KCGPTFFPCASGIHCIIGRFRCNGFEDCPDGSDEENCT, and LCSTARYHCKNGLCIDKSFICDGQNNCQDNSDEESCE. Disulfide bonds link cysteine 29-cysteine 42, cysteine 37-cysteine 55, cysteine 49-cysteine 64, cysteine 71-cysteine 84, cysteine 78-cysteine 97, cysteine 91-cysteine 106, cysteine 113-cysteine 125, cysteine 120-cysteine 138, and cysteine 132-cysteine 147. Residues 30–57 form a (Microbial infection) Interaction with Venezuelan equine encephalitis virus/VEEV spike proteins E1 and E2 region; that stretch reads NIPGNFMCSNGRCIPGAWQCDGLPDCFD. A helical transmembrane segment spans residues 174–194; it reads YAIIGSSVIFVLVVALLALVL. The Cytoplasmic segment spans residues 195-345; it reads HHQRKRNNLM…SEPSQGTEEV (151 aa). Short sequence motifs (involved in ITCH interaction) lie at residues 256–259 and 275–278; these read PPSY and PPPY. The tract at residues 270-345 is disordered; it reads WYDLPPPPYS…SEPSQGTEEV (76 aa). The span at 295 to 313 shows a compositional bias: low complexity; it reads SRSGSANSASSQAASSLLS.

The protein belongs to the LDLR family. Interacts with APP precursor C-terminus. Interacts directly with ITCH; this interaction promotes ITCH auto-ubiquitination leading to its degradation. Interacts directly with NEDD4; this interaction promotes NEDD4 auto-ubiquitination. Interacts directly with NEDD4L. In terms of assembly, (Microbial infection) Interacts (via domain LDL-receptor class A 1) with Venezuelan equine encephalitis virus/VEEV spike proteins E1 and E2. As to expression, expressed at high levels in brain, lung, skeletal muscle, and pancreas. Expressed at moderate levels in heart, placenta, and kidney but not detected in the liver.

Its subcellular location is the cell membrane. In terms of biological role, may influence APP processing, resulting in a decrease in sAPP-alpha production and increased amyloidogenic P3 peptide production. May regulate ITCH and NEDD4 E3 ligase activity and degradation. (Microbial infection) Acts as a receptor for Venezuelan equine encephalitis virus. In Homo sapiens (Human), this protein is Low-density lipoprotein receptor class A domain-containing protein 3.